The following is a 447-amino-acid chain: MTAHEVNFDGLVGLTHHYAGLSFGNEASTRHRFQVSNPRLAVKQGLLKMKALADAGFPQAVIPPHERPFIPALRQLGFTGSDEQILDKVARQAPRWLSSVSSASPMWVANAATVCPSADALDGKVHLTVANLNNKFHRALEAPVTEALLRAIFRDESQFSVHSALPQVALLGDEGAANHNRLGGEYGSAGVQLFVYGREEENEIRPARYPARQSREASEAVARLNQVNPQQVIFAQQNPEVIDQGVFHNDVIAVSNRQVLFCHEAAFARQKVLINQLRTRVDGFMAIEVPAGEVSVSDAVATYLFNSQLLSRDDGSMLLVLPRECQDHAGVWRYLNKLVAEDNPISAMQVFDLRESMANGGGPACLRLRVVLTEEERRAVNPAVMMNDALFTALNAWADRYYRDRLTAADLADPLLLREGREALDVLTRLLDLGSVYPFQQTGAADG.

Residues A19–S28, N110, and H137–R138 contribute to the substrate site. The active site involves E174. R212 provides a ligand contact to substrate. H248 is an active-site residue. The substrate site is built by D250 and N359. C365 functions as the Nucleophile in the catalytic mechanism.

This sequence belongs to the succinylarginine dihydrolase family. Homodimer.

It carries out the reaction N(2)-succinyl-L-arginine + 2 H2O + 2 H(+) = N(2)-succinyl-L-ornithine + 2 NH4(+) + CO2. It functions in the pathway amino-acid degradation; L-arginine degradation via AST pathway; L-glutamate and succinate from L-arginine: step 2/5. Its function is as follows. Catalyzes the hydrolysis of N(2)-succinylarginine into N(2)-succinylornithine, ammonia and CO(2). This chain is N-succinylarginine dihydrolase, found in Salmonella typhi.